A 100-amino-acid polypeptide reads, in one-letter code: Urease subunit gamma (100 aa).

It belongs to the urease gamma subunit family. Heterotrimer of UreA (gamma), UreB (beta) and UreC (alpha) subunits. Three heterotrimers associate to form the active enzyme.

It is found in the cytoplasm. It catalyses the reaction urea + 2 H2O + H(+) = hydrogencarbonate + 2 NH4(+). It functions in the pathway nitrogen metabolism; urea degradation; CO(2) and NH(3) from urea (urease route): step 1/1. This is Urease subunit gamma from Methylobacillus flagellatus (strain ATCC 51484 / DSM 6875 / VKM B-1610 / KT).